Here is a 248-residue protein sequence, read N- to C-terminus: Ubiquinone/menaquinone biosynthesis C-methyltransferase UbiE (248 aa).

S-adenosyl-L-methionine-binding residues include S68 and D92.

It belongs to the class I-like SAM-binding methyltransferase superfamily. MenG/UbiE family.

It carries out the reaction a 2-demethylmenaquinol + S-adenosyl-L-methionine = a menaquinol + S-adenosyl-L-homocysteine + H(+). The catalysed reaction is a 2-methoxy-6-(all-trans-polyprenyl)benzene-1,4-diol + S-adenosyl-L-methionine = a 5-methoxy-2-methyl-3-(all-trans-polyprenyl)benzene-1,4-diol + S-adenosyl-L-homocysteine + H(+). The protein operates within quinol/quinone metabolism; menaquinone biosynthesis; menaquinol from 1,4-dihydroxy-2-naphthoate: step 2/2. It functions in the pathway cofactor biosynthesis; ubiquinone biosynthesis. In terms of biological role, methyltransferase required for the conversion of demethylmenaquinol (DMKH2) to menaquinol (MKH2) and the conversion of 2-polyprenyl-6-methoxy-1,4-benzoquinol (DDMQH2) to 2-polyprenyl-3-methyl-6-methoxy-1,4-benzoquinol (DMQH2). The protein is Ubiquinone/menaquinone biosynthesis C-methyltransferase UbiE of Rickettsia massiliae (strain Mtu5).